Consider the following 261-residue polypeptide: WW domain-binding protein 2 (261 aa).

Residues 1–84 (MALNKNHSEG…YLMKDCEIKQ (84 aa)) enclose the GRAM domain. Y192 is modified (phosphotyrosine). The short motif at 196–200 (PPPPY) is the PPxY motif 1 element. The segment covering 196–209 (PPPPYPGPMEPPVS) has biased composition (pro residues). The tract at residues 196 to 261 (PPPPYPGPME…YYPPEDKKTQ (66 aa)) is disordered. Over residues 210–230 (GPSAPATPAAEAKAAEAAASA) the composition is skewed to low complexity. Y231 is modified (phosphotyrosine). Positions 245–254 (SQPPPPPYYP) are enriched in pro residues. Positions 248–252 (PPPPY) match the PPxY motif 2 motif.

As to quaternary structure, binds to the WW domain of YAP1, WWP1 and WWP2. Interacts with NEDD4. Interacts with ESR1 and UBE3A. Phosphorylated in repsonse to EGF as well as estrogen and progesterone hormones. Tyr-192 and Tyr-231 are phosphorylated by YES and SRC inducing nuclear translocation. As to expression, expressed in the ear and the eye. Isoform 1 is expressed in brain, inner ear and organ of Corti. Isoform 2 is only detected in brain.

It localises to the cytoplasm. It is found in the nucleus. Functionally, acts as a transcriptional coactivator of estrogen and progesterone receptors (ESR1 and PGR) upon hormone activation. In presence of estrogen, binds to ESR1-responsive promoters. Synergizes with YAP1 to enhance PGR activity. Modulates expression of post-synaptic scaffolding proteins via regulation of ESR1, ESR2 and PGR. The chain is WW domain-binding protein 2 (Wbp2) from Mus musculus (Mouse).